A 331-amino-acid polypeptide reads, in one-letter code: D-alanine--D-alanine ligase (331 aa).

Residues 122–328 (KLWYDAIGIP…FHEFLADCIE (207 aa)) form the ATP-grasp domain. Residue 152-207 (AFDKWGKLFVKAARQGSSVGCYSVTNIEQLSDAIDKAFGFSHQVLVEKAVKPRELE) participates in ATP binding. 3 residues coordinate Mg(2+): Asp-282, Glu-295, and Asn-297.

The protein belongs to the D-alanine--D-alanine ligase family. Requires Mg(2+) as cofactor. Mn(2+) serves as cofactor.

It localises to the cytoplasm. It catalyses the reaction 2 D-alanine + ATP = D-alanyl-D-alanine + ADP + phosphate + H(+). The protein operates within cell wall biogenesis; peptidoglycan biosynthesis. In terms of biological role, cell wall formation. This is D-alanine--D-alanine ligase from Vibrio vulnificus (strain YJ016).